A 754-amino-acid polypeptide reads, in one-letter code: 5-methyltetrahydropteroyltriglutamate--homocysteine methyltransferase (754 aa).

5-methyltetrahydropteroyltri-L-glutamate is bound by residues 17-20 and K117; that span reads RELK. L-homocysteine contacts are provided by residues 431-433 and E484; that span reads IGS. Residues 431–433 and E484 each bind L-methionine; that span reads IGS. Residues 515-516 and W561 each bind 5-methyltetrahydropteroyltri-L-glutamate; that span reads RC. D599 serves as a coordination point for L-homocysteine. D599 is an L-methionine binding site. Residue E605 participates in 5-methyltetrahydropteroyltri-L-glutamate binding. Zn(2+) is bound by residues H641, C643, and E665. The active-site Proton donor is H694. A Zn(2+)-binding site is contributed by C726.

It belongs to the vitamin-B12 independent methionine synthase family. Zn(2+) is required as a cofactor.

The enzyme catalyses 5-methyltetrahydropteroyltri-L-glutamate + L-homocysteine = tetrahydropteroyltri-L-glutamate + L-methionine. Its pathway is amino-acid biosynthesis; L-methionine biosynthesis via de novo pathway; L-methionine from L-homocysteine (MetE route): step 1/1. In terms of biological role, catalyzes the transfer of a methyl group from 5-methyltetrahydrofolate to homocysteine resulting in methionine formation. This chain is 5-methyltetrahydropteroyltriglutamate--homocysteine methyltransferase, found in Salmonella choleraesuis (strain SC-B67).